Reading from the N-terminus, the 148-residue chain is Ribonuclease H (148 aa).

The 142-residue stretch at 1 to 142 (MSDSVEIYTD…ADQLANRGVD (142 aa)) folds into the RNase H type-1 domain. Mg(2+)-binding residues include D10, E48, D70, and D134. A disordered region spans residues 129 to 148 (GNERADQLANRGVDEVRAQR).

This sequence belongs to the RNase H family. As to quaternary structure, monomer. Requires Mg(2+) as cofactor.

It is found in the cytoplasm. It carries out the reaction Endonucleolytic cleavage to 5'-phosphomonoester.. Endonuclease that specifically degrades the RNA of RNA-DNA hybrids. This Pseudomonas entomophila (strain L48) protein is Ribonuclease H.